The following is a 306-amino-acid chain: Pyridoxal 5'-phosphate synthase subunit SNZERR (306 aa).

Asp-34 is a binding site for D-ribose 5-phosphate. Residue Lys-91 is the Schiff-base intermediate with D-ribose 5-phosphate of the active site. Gly-163 is a binding site for D-ribose 5-phosphate. Arg-175 serves as a coordination point for D-glyceraldehyde 3-phosphate. Residues Gly-224 and 245-246 (GS) each bind D-ribose 5-phosphate.

This sequence belongs to the PdxS/SNZ family.

It catalyses the reaction aldehydo-D-ribose 5-phosphate + D-glyceraldehyde 3-phosphate + L-glutamine = pyridoxal 5'-phosphate + L-glutamate + phosphate + 3 H2O + H(+). It participates in cofactor biosynthesis; pyridoxal 5'-phosphate biosynthesis. Functionally, catalyzes the formation of pyridoxal 5'-phosphate from ribose 5-phosphate (RBP), glyceraldehyde 3-phosphate (G3P) and ammonia. The ammonia is provided by PDX2. Can also use ribulose 5-phosphate and dihydroxyacetone phosphate as substrates, resulting from enzyme-catalyzed isomerization of RBP and G3P, respectively. Also plays an indirect role in resistance to singlet oxygen-generating photosensitizers. This chain is Pyridoxal 5'-phosphate synthase subunit SNZERR (SNZERR), found in Suberites domuncula (Sponge).